The chain runs to 202 residues: Small ribosomal subunit protein uS2 (202 aa).

The protein belongs to the universal ribosomal protein uS2 family.

The chain is Small ribosomal subunit protein uS2 (rps2) from Pyrococcus abyssi (strain GE5 / Orsay).